A 213-amino-acid chain; its full sequence is ATP-dependent Clp protease proteolytic subunit (213 aa).

The active-site Nucleophile is the Ser114. His139 is a catalytic residue.

The protein belongs to the peptidase S14 family. In terms of assembly, fourteen ClpP subunits assemble into 2 heptameric rings which stack back to back to give a disk-like structure with a central cavity, resembling the structure of eukaryotic proteasomes.

The protein resides in the cytoplasm. It catalyses the reaction Hydrolysis of proteins to small peptides in the presence of ATP and magnesium. alpha-casein is the usual test substrate. In the absence of ATP, only oligopeptides shorter than five residues are hydrolyzed (such as succinyl-Leu-Tyr-|-NHMec, and Leu-Tyr-Leu-|-Tyr-Trp, in which cleavage of the -Tyr-|-Leu- and -Tyr-|-Trp bonds also occurs).. Cleaves peptides in various proteins in a process that requires ATP hydrolysis. Has a chymotrypsin-like activity. Plays a major role in the degradation of misfolded proteins. In Methylobacillus flagellatus (strain ATCC 51484 / DSM 6875 / VKM B-1610 / KT), this protein is ATP-dependent Clp protease proteolytic subunit.